Reading from the N-terminus, the 217-residue chain is ATP phosphoribosyltransferase (217 aa).

The protein belongs to the ATP phosphoribosyltransferase family. Short subfamily. In terms of assembly, heteromultimer composed of HisG and HisZ subunits.

The protein resides in the cytoplasm. It carries out the reaction 1-(5-phospho-beta-D-ribosyl)-ATP + diphosphate = 5-phospho-alpha-D-ribose 1-diphosphate + ATP. It participates in amino-acid biosynthesis; L-histidine biosynthesis; L-histidine from 5-phospho-alpha-D-ribose 1-diphosphate: step 1/9. Functionally, catalyzes the condensation of ATP and 5-phosphoribose 1-diphosphate to form N'-(5'-phosphoribosyl)-ATP (PR-ATP). Has a crucial role in the pathway because the rate of histidine biosynthesis seems to be controlled primarily by regulation of HisG enzymatic activity. The protein is ATP phosphoribosyltransferase of Synechococcus sp. (strain WH7803).